The primary structure comprises 68 residues: DNA-directed RNA polymerase subunit omega (68 aa).

Belongs to the RNA polymerase subunit omega family. As to quaternary structure, the RNAP catalytic core consists of 2 alpha, 1 beta, 1 beta' and 1 omega subunit. When a sigma factor is associated with the core the holoenzyme is formed, which can initiate transcription.

The catalysed reaction is RNA(n) + a ribonucleoside 5'-triphosphate = RNA(n+1) + diphosphate. In terms of biological role, promotes RNA polymerase assembly. Latches the N- and C-terminal regions of the beta' subunit thereby facilitating its interaction with the beta and alpha subunits. The protein is DNA-directed RNA polymerase subunit omega of Brevibacillus brevis (strain 47 / JCM 6285 / NBRC 100599).